The chain runs to 98 residues: Plastocyanin (98 aa).

The 98-residue stretch at 1-98 folds into the Plastocyanin-like domain; the sequence is AQIVKLGGDD…AGMKMTITVQ (98 aa). Cu cation contacts are provided by H38, C83, H86, and M91.

The protein belongs to the plastocyanin family. It depends on Cu(2+) as a cofactor.

It localises to the plastid. The protein resides in the chloroplast thylakoid membrane. Its function is as follows. Participates in electron transfer between P700 and the cytochrome b6-f complex in photosystem I. This is Plastocyanin (PETE) from Ulva arasakii (Sea lettuce).